A 263-amino-acid polypeptide reads, in one-letter code: Hydroxyethylthiazole kinase (263 aa).

M41 lines the substrate pocket. Residues R117 and T163 each coordinate ATP. G190 provides a ligand contact to substrate.

This sequence belongs to the Thz kinase family. Requires Mg(2+) as cofactor.

The enzyme catalyses 5-(2-hydroxyethyl)-4-methylthiazole + ATP = 4-methyl-5-(2-phosphooxyethyl)-thiazole + ADP + H(+). The protein operates within cofactor biosynthesis; thiamine diphosphate biosynthesis; 4-methyl-5-(2-phosphoethyl)-thiazole from 5-(2-hydroxyethyl)-4-methylthiazole: step 1/1. Functionally, catalyzes the phosphorylation of the hydroxyl group of 4-methyl-5-beta-hydroxyethylthiazole (THZ). In Exiguobacterium sp. (strain ATCC BAA-1283 / AT1b), this protein is Hydroxyethylthiazole kinase.